Reading from the N-terminus, the 154-residue chain is MKTYSAKPSEVDRKWYVIDAEGVVLGRLAVIIADLLRGKNKTIYTPHIDTGDHVVVINAEKVHLTGNKAANERFFWHTGHPGGIKSRSLGQIRDGAHPERLIEKAVERMMPRGPLARAQFKKLRVYGGEAHPHDAQQPVVLDVAALNPKNKRSA.

Belongs to the universal ribosomal protein uL13 family. Part of the 50S ribosomal subunit.

Functionally, this protein is one of the early assembly proteins of the 50S ribosomal subunit, although it is not seen to bind rRNA by itself. It is important during the early stages of 50S assembly. This Rhodospirillum rubrum (strain ATCC 11170 / ATH 1.1.1 / DSM 467 / LMG 4362 / NCIMB 8255 / S1) protein is Large ribosomal subunit protein uL13.